Here is a 269-residue protein sequence, read N- to C-terminus: 3-ketodihydrosphingosine reductase (269 aa).

Residues Gly10, Ser12, Ser13, Gly14, Lys36, and Asp50 each contribute to the NADPH site. The GXSXG signature appears at 10 to 14 (GASSG). The active-site Nucleophile; for lipase activity is the Ser12. Catalysis depends on Ser128, which acts as the Proton donor. Catalysis depends on Tyr142, which acts as the Proton acceptor. 2 residues coordinate NADP(+): Tyr142 and Lys146. NADPH contacts are provided by residues 142-146 (YSASK) and 175-177 (FNT). The active site involves Lys146. Lys146 (lowers pKa of active site Tyr) is an active-site residue.

It belongs to the short-chain dehydrogenases/reductases (SDR) family.

It catalyses the reaction sphinganine + NADP(+) = 3-oxosphinganine + NADPH + H(+). Its pathway is lipid metabolism; sphingolipid metabolism. Functionally, catalyzes the reduction of 3'-oxosphinganine (3-ketodihydrosphingosine/KDS) to sphinganine (dihydrosphingosine/DHS), the second step of de novo sphingolipid biosynthesis. The chain is 3-ketodihydrosphingosine reductase from Bacteroides thetaiotaomicron (strain ATCC 29148 / DSM 2079 / JCM 5827 / CCUG 10774 / NCTC 10582 / VPI-5482 / E50).